A 963-amino-acid polypeptide reads, in one-letter code: Protein bicaudal C homolog 1-A (963 aa).

Positions M1–R48 are disordered. Residues M12–E22 show a composition bias toward polar residues. A compositionally biased stretch (basic and acidic residues) spans D35–R48. KH domains follow at residues R128 to I195 and P280 to L344. Residues E592–S601 are compositionally biased toward polar residues. 3 disordered regions span residues E592 to E613, E668 to S713, and L767 to A834. Composition is skewed to basic and acidic residues over residues S602–P612 and V683–E696. Low complexity predominate over residues E784–L797. The span at I812 to G824 shows a compositional bias: polar residues. Residues F862 to N925 enclose the SAM domain.

Belongs to the BicC family.

In terms of biological role, putative RNA-binding protein. May be involved in regulating gene expression during embryonic development. Seems to be involved in endoderm formation. Ectopic expression results in endoderm formation in the absence of mesoderm induction. In Xenopus laevis (African clawed frog), this protein is Protein bicaudal C homolog 1-A (bicc1-a).